We begin with the raw amino-acid sequence, 302 residues long: Small ribosomal subunit biogenesis GTPase RsgA (302 aa).

In terms of domain architecture, CP-type G spans 75–233 (KNELIRPAVS…IMDTPGFSSM (159 aa)). GTP is bound by residues 124–127 (NKKD) and 175–183 (GPSGVGKSS). 4 residues coordinate Zn(2+): Cys-257, Cys-262, His-264, and Cys-270.

It belongs to the TRAFAC class YlqF/YawG GTPase family. RsgA subfamily. In terms of assembly, monomer. Associates with 30S ribosomal subunit, binds 16S rRNA. Zn(2+) serves as cofactor.

It is found in the cytoplasm. Functionally, one of several proteins that assist in the late maturation steps of the functional core of the 30S ribosomal subunit. Helps release RbfA from mature subunits. May play a role in the assembly of ribosomal proteins into the subunit. Circularly permuted GTPase that catalyzes slow GTP hydrolysis, GTPase activity is stimulated by the 30S ribosomal subunit. The chain is Small ribosomal subunit biogenesis GTPase RsgA from Agathobacter rectalis (strain ATCC 33656 / DSM 3377 / JCM 17463 / KCTC 5835 / VPI 0990) (Eubacterium rectale).